Here is a 132-residue protein sequence, read N- to C-terminus: Interleukin-5 (132 aa).

Positions 1 to 19 are cleaved as a signal peptide; it reads MHLRLTLVALGAAYVCANA. N-linked (GlcNAc...) asparagine glycosylation is found at Asn74 and Asn88.

The protein belongs to the IL-5 family. Homodimer; disulfide-linked. Interacts with IL5RA. Interacts with CSF2RB.

Its subcellular location is the secreted. Homodimeric cytokine expressed predominantly by T-lymphocytes and NK cells that plays an important role in the survival, differentiation, and chemotaxis of eosinophils. Also acts on activated and resting B-cells to induce immunoglobulin production, growth, and differentiation. Mechanistically, exerts its biological effects through a receptor composed of IL5RA subunit and the cytokine receptor common subunit beta/CSF2RB. Binding to the receptor leads to activation of various kinases including LYN, SYK and JAK2 and thereby propagates signals through the RAS-MAPK and JAK-STAT5 pathways respectively. The sequence is that of Interleukin-5 (IL5) from Ovis aries (Sheep).